The sequence spans 683 residues: Leucine-rich repeat and calponin homology domain-containing protein 4 (683 aa).

Low complexity predominate over residues 1 to 18 (MAAAVAAPLAAGGEEAAA). The disordered stretch occupies residues 1-34 (MAAAVAAPLAAGGEEAAATTSVPGSPGLPGRRSA). LRR repeat units follow at residues 41-64 (AVAT…AARS), 67-90 (LSDI…ACQL), 92-113 (SLEG…LGNL), 114-136 (TALT…ICQL), 138-158 (LRVL…IGTL), 159-181 (GSLR…LCGL), 182-204 (SSLR…LGDL), 206-226 (LVRL…FCRL), and 227-250 (RHLQ…CLKG). Residues 268–292 (ALGDLAPSRPPSFSPCPAEDLFPGH) are disordered. Residues S279, S281, S304, S307, S309, and S313 each carry the phosphoserine modification. Disordered regions lie at residues 326 to 436 (FRIS…LLKP) and 449 to 539 (STQA…DEKD). Basic and acidic residues-rich tracts occupy residues 330–345 (ELAR…KEDG), 357–376 (IDSH…EQRP), and 384–418 (GDRE…ERRQ). Phosphoserine occurs at positions 432 and 457. A compositionally biased stretch (polar residues) spans 449–460 (STQAMHNGSPKS). 2 stretches are compositionally biased toward low complexity: residues 461–481 (SASQ…PASQ) and 511–524 (SSSQ…SPDS). S511, S513, S517, S521, and S589 each carry phosphoserine. In terms of domain architecture, Calponin-homology (CH) spans 534-647 (VPDEKDLMTQ…ALEAVKRVGG (114 aa)). The chain crosses the membrane as a helical span at residues 653–673 (LWPPSGLGGFVVFYVVLMLLL).

Its subcellular location is the cell membrane. In terms of biological role, accessory protein that regulates signaling by multiple TLRs, acting as a broad-spanning regulator of the innate immune response. In macrophages, binds LPS and promotes proper docking of LPS in lipid raft membrane. May be required for lipid raft maintenance. The polypeptide is Leucine-rich repeat and calponin homology domain-containing protein 4 (Homo sapiens (Human)).